We begin with the raw amino-acid sequence, 138 residues long: Small ribosomal subunit protein uS11c (138 aa).

Residues 1-23 (MAKTIPRIGSRKNGRIGSRKNTR) form a disordered region. Over residues 9-23 (GSRKNGRIGSRKNTR) the composition is skewed to basic residues.

It belongs to the universal ribosomal protein uS11 family. Part of the 30S ribosomal subunit.

The protein localises to the plastid. The protein resides in the chloroplast. This chain is Small ribosomal subunit protein uS11c, found in Daucus carota (Wild carrot).